The following is a 277-amino-acid chain: Large ribosomal subunit protein uL2 (277 aa).

The segment at 215–277 (GIRPTVRGSV…KLIVKRRNDK (63 aa)) is disordered. The segment covering 264–277 (KYSDKLIVKRRNDK) has biased composition (basic and acidic residues).

The protein belongs to the universal ribosomal protein uL2 family. Part of the 50S ribosomal subunit. Forms a bridge to the 30S subunit in the 70S ribosome.

One of the primary rRNA binding proteins. Required for association of the 30S and 50S subunits to form the 70S ribosome, for tRNA binding and peptide bond formation. It has been suggested to have peptidyltransferase activity; this is somewhat controversial. Makes several contacts with the 16S rRNA in the 70S ribosome. This chain is Large ribosomal subunit protein uL2, found in Clostridium acetobutylicum (strain ATCC 824 / DSM 792 / JCM 1419 / IAM 19013 / LMG 5710 / NBRC 13948 / NRRL B-527 / VKM B-1787 / 2291 / W).